The primary structure comprises 455 residues: Putative FBD-associated F-box protein At5g56400 (455 aa).

Residues 32–81 (VDKISDLPEDLLVHILSLLPTTNDIVATSGVSKRWESLWTKVHKLRFNDR) enclose the F-box domain. The 50-residue stretch at 372–421 (WNQQPSYVPECLTKSLEIFEWRNYKATFRERDVAVYILKNSTCLKKTVIS) folds into the FBD domain.

In Arabidopsis thaliana (Mouse-ear cress), this protein is Putative FBD-associated F-box protein At5g56400.